The following is a 261-amino-acid chain: 1,6-dihydroxycyclohexa-2,4-diene-1-carboxylate dehydrogenase (261 aa).

13–37 (IVTGAAQGIGRGVALRIAQEGGCLI) serves as a coordination point for NAD(+). Serine 145 contributes to the substrate binding site. Catalysis depends on tyrosine 156, which acts as the Proton acceptor.

The protein belongs to the short-chain dehydrogenases/reductases (SDR) family. Homodimer.

It carries out the reaction (1R,6S)-1,6-dihydroxycyclohexa-2,4-diene-1-carboxylate + NAD(+) = catechol + CO2 + NADH. Its pathway is aromatic compound metabolism; benzoate degradation via hydroxylation; catechol from benzoate: step 2/2. Functionally, degradation of 2-hydro-1,2-dihydroxy benzoate (DHB) to catechol. This Acinetobacter baylyi (strain ATCC 33305 / BD413 / ADP1) protein is 1,6-dihydroxycyclohexa-2,4-diene-1-carboxylate dehydrogenase (benD).